Consider the following 250-residue polypeptide: Ribosomal RNA small subunit methyltransferase J (250 aa).

S-adenosyl-L-methionine-binding positions include 96 to 97 and Asp168; that span reads RD.

This sequence belongs to the methyltransferase superfamily. RsmJ family.

The protein resides in the cytoplasm. The enzyme catalyses guanosine(1516) in 16S rRNA + S-adenosyl-L-methionine = N(2)-methylguanosine(1516) in 16S rRNA + S-adenosyl-L-homocysteine + H(+). Functionally, specifically methylates the guanosine in position 1516 of 16S rRNA. This is Ribosomal RNA small subunit methyltransferase J from Neisseria meningitidis serogroup C / serotype 2a (strain ATCC 700532 / DSM 15464 / FAM18).